Reading from the N-terminus, the 338-residue chain is 1-aminocyclopropane-1-carboxylate deaminase (338 aa).

K51 is subject to N6-(pyridoxal phosphate)lysine. S78 functions as the Nucleophile in the catalytic mechanism.

This sequence belongs to the ACC deaminase/D-cysteine desulfhydrase family. In terms of assembly, homotrimer. Pyridoxal 5'-phosphate serves as cofactor.

The enzyme catalyses 1-aminocyclopropane-1-carboxylate + H2O = 2-oxobutanoate + NH4(+). Functionally, catalyzes a cyclopropane ring-opening reaction, the irreversible conversion of 1-aminocyclopropane-1-carboxylate (ACC) to ammonia and alpha-ketobutyrate. Allows growth on ACC as a nitrogen source. The polypeptide is 1-aminocyclopropane-1-carboxylate deaminase (Burkholderia cenocepacia (strain ATCC BAA-245 / DSM 16553 / LMG 16656 / NCTC 13227 / J2315 / CF5610) (Burkholderia cepacia (strain J2315))).